A 1007-amino-acid polypeptide reads, in one-letter code: Serine/threonine-protein kinase atg1 (1007 aa).

Residues 30 to 336 (YTRLSEIGRG…FDVYFAHKVL (307 aa)) enclose the Protein kinase domain. ATP contacts are provided by residues 36 to 44 (IGRGSFAVV) and lysine 59. The Proton acceptor role is filled by aspartate 174. Disordered stretches follow at residues 343–489 (LVAD…KEHA), 524–586 (GGQA…PTSA), 795–817 (RLPSDHPSHPSNLSVGSSLGSGT), and 878–900 (SRPGQSGGADRADARRDNEDGGQ). The segment covering 373–387 (MKRENALSGGVRDEP) has biased composition (basic and acidic residues). Residues 396-410 (AMTQSPRPETPSTPM) show a composition bias toward polar residues. Residues 477-489 (KPVEKAKDEKEHA) show a composition bias toward basic and acidic residues. The span at 534 to 555 (SGAAPGTPPAGGSSPHASPSKA) shows a compositional bias: low complexity. Residues 563 to 579 (SRADSAHVRQNSYDRRY) are compositionally biased toward basic and acidic residues. Over residues 805-817 (SNLSVGSSLGSGT) the composition is skewed to low complexity. Positions 887-896 (DRADARRDNE) are enriched in basic and acidic residues.

Belongs to the protein kinase superfamily. Ser/Thr protein kinase family. APG1/unc-51/ULK1 subfamily. Homodimer. Forms a ternary complex with ATG13 and ATG17.

The protein localises to the cytoplasm. The protein resides in the preautophagosomal structure membrane. The enzyme catalyses L-seryl-[protein] + ATP = O-phospho-L-seryl-[protein] + ADP + H(+). It carries out the reaction L-threonyl-[protein] + ATP = O-phospho-L-threonyl-[protein] + ADP + H(+). Serine/threonine protein kinase involved in the cytoplasm to vacuole transport (Cvt) and found to be essential in autophagy, where it is required for the formation of autophagosomes. Involved in the clearance of protein aggregates which cannot be efficiently cleared by the proteasome. Required for selective autophagic degradation of the nucleus (nucleophagy) as well as for mitophagy which contributes to regulate mitochondrial quantity and quality by eliminating the mitochondria to a basal level to fulfill cellular energy requirements and preventing excess ROS production. Also involved in endoplasmic reticulum-specific autophagic process, in selective removal of ER-associated degradation (ERAD) substrates. Plays a key role in ATG9 and ATG23 cycling through the pre-autophagosomal structure and is necessary to promote ATG18 binding to ATG9 through phosphorylation of ATG9. Catalyzes phosphorylation of ATG4, decreasing the interaction between ATG4 and ATG8 and impairing deconjugation of PE-conjugated forms of ATG8. The sequence is that of Serine/threonine-protein kinase atg1 from Aspergillus niger (strain ATCC MYA-4892 / CBS 513.88 / FGSC A1513).